The following is a 382-amino-acid chain: Probable dual-specificity RNA methyltransferase RlmN (382 aa).

Glu-118 serves as the catalytic Proton acceptor. A Radical SAM core domain is found at 124-370; that stretch reads YDKRVTMCIS…TTVRDTRGSD (247 aa). Cys-131 and Cys-375 are joined by a disulfide. Cys-138, Cys-142, and Cys-145 together coordinate [4Fe-4S] cluster. Residues 196-197, Ser-230, 253-255, and Asn-332 contribute to the S-adenosyl-L-methionine site; these read GE and SLH. Cys-375 (S-methylcysteine intermediate) is an active-site residue.

This sequence belongs to the radical SAM superfamily. RlmN family. It depends on [4Fe-4S] cluster as a cofactor.

The protein resides in the cytoplasm. It catalyses the reaction adenosine(2503) in 23S rRNA + 2 reduced [2Fe-2S]-[ferredoxin] + 2 S-adenosyl-L-methionine = 2-methyladenosine(2503) in 23S rRNA + 5'-deoxyadenosine + L-methionine + 2 oxidized [2Fe-2S]-[ferredoxin] + S-adenosyl-L-homocysteine. The catalysed reaction is adenosine(37) in tRNA + 2 reduced [2Fe-2S]-[ferredoxin] + 2 S-adenosyl-L-methionine = 2-methyladenosine(37) in tRNA + 5'-deoxyadenosine + L-methionine + 2 oxidized [2Fe-2S]-[ferredoxin] + S-adenosyl-L-homocysteine. Specifically methylates position 2 of adenine 2503 in 23S rRNA and position 2 of adenine 37 in tRNAs. This Kocuria rhizophila (strain ATCC 9341 / DSM 348 / NBRC 103217 / DC2201) protein is Probable dual-specificity RNA methyltransferase RlmN.